The chain runs to 315 residues: Cytochrome f (315 aa).

The first 36 residues, 1-36 (MKQSLLSVLTKKSLRLLAALFLVVTSVFSLPQAAQA), serve as a signal peptide directing secretion. Residues Phe37, Cys57, Cys60, and His61 each coordinate heme. The helical transmembrane segment at 281-301 (IKWLMVFFSAIMISQTLLVLK) threads the bilayer.

The protein belongs to the cytochrome f family. The 4 large subunits of the cytochrome b6-f complex are cytochrome b6, subunit IV (17 kDa polypeptide, PetD), cytochrome f and the Rieske protein, while the 4 small subunits are PetG, PetL, PetM and PetN. The complex functions as a dimer. Heme is required as a cofactor.

It localises to the cellular thylakoid membrane. Component of the cytochrome b6-f complex, which mediates electron transfer between photosystem II (PSII) and photosystem I (PSI), cyclic electron flow around PSI, and state transitions. The protein is Cytochrome f of Acaryochloris marina (strain MBIC 11017).